A 908-amino-acid polypeptide reads, in one-letter code: Transferrin-binding protein A (908 aa).

The signal sequence occupies residues 1–24 (MQQQHLFRLNILCLSLMTALPVYA). The TonB box motif lies at 38-45 (DTIQVKAK). Residues 51-176 (RDNEVTGLGK…LAGSVAFQTK (126 aa)) form the TBDR plug domain. Positions 187 to 908 (QWGIQSKTAY…NYTFSLEMKF (722 aa)) constitute a TBDR beta-barrel domain. The TonB C-terminal box motif lies at 891 to 908 (NRYAAPGRNYTFSLEMKF).

Belongs to the TonB-dependent receptor family. Binds both human apo- and holo-transferrin (TF), via the TF C-terminus. Forms a large complex with TF and TbpB.

Its subcellular location is the cell outer membrane. Its function is as follows. Neisseria acquires iron by extracting it from serum transferrin (TF) in its human host. Acts as a TF receptor and is required for TF utilization. Binds both apo- and holo-TF, via the TF C-terminus. The protein is Transferrin-binding protein A of Neisseria meningitidis serogroup B.